The chain runs to 102 residues: Integration host factor subunit alpha (102 aa).

This sequence belongs to the bacterial histone-like protein family. In terms of assembly, heterodimer of an alpha and a beta chain.

In terms of biological role, this protein is one of the two subunits of integration host factor, a specific DNA-binding protein that functions in genetic recombination as well as in transcriptional and translational control. The sequence is that of Integration host factor subunit alpha from Chromohalobacter salexigens (strain ATCC BAA-138 / DSM 3043 / CIP 106854 / NCIMB 13768 / 1H11).